A 132-amino-acid polypeptide reads, in one-letter code: Small ribosomal subunit protein uS8 (132 aa).

Belongs to the universal ribosomal protein uS8 family. In terms of assembly, part of the 30S ribosomal subunit. Contacts proteins S5 and S12.

Functionally, one of the primary rRNA binding proteins, it binds directly to 16S rRNA central domain where it helps coordinate assembly of the platform of the 30S subunit. The sequence is that of Small ribosomal subunit protein uS8 from Streptococcus pyogenes serotype M1.